The primary structure comprises 62 residues: MCIIVKYSQCNLFFQDVLRCRHVLCMLFSIVVHFRLSSFVSVCGVRIMCNCINCSRFIHNIN.

This is an uncharacterized protein from Saccharomyces cerevisiae (strain ATCC 204508 / S288c) (Baker's yeast).